Here is a 253-residue protein sequence, read N- to C-terminus: DNA repair protein RecO (253 aa).

It belongs to the RecO family.

Its function is as follows. Involved in DNA repair and RecF pathway recombination. In Nitrobacter hamburgensis (strain DSM 10229 / NCIMB 13809 / X14), this protein is DNA repair protein RecO.